A 165-amino-acid polypeptide reads, in one-letter code: MKTSRLPIAIQQAVMRRLREKLAQANLKLGRNYPEPKLSYTQRGTSAGTAWLESYEIRLNPVLLLENSEAFIEEVVPHELAHLLVWKHFGRVAPHGKEWKWMMESVLGVPARRTHQFELQSVRRNTFPYRCKCQEHQLTVRRHNRVVRGEAVYRCVHCGEQLIAK.

In terms of domain architecture, SprT-like spans 20–162; it reads EKLAQANLKL…YRCVHCGEQL (143 aa). H78 serves as a coordination point for Zn(2+). The active site involves E79. Zn(2+) is bound at residue H82.

This sequence belongs to the SprT family. The cofactor is Zn(2+).

Its subcellular location is the cytoplasm. In Escherichia coli (strain SMS-3-5 / SECEC), this protein is Protein SprT.